We begin with the raw amino-acid sequence, 132 residues long: Small ribosomal subunit protein uS9 (132 aa).

A disordered region spans residues 100–132 (LKSNGLLTRDDRTKERKKPGLKRARKAPQYTKR). Residues 114 to 132 (ERKKPGLKRARKAPQYTKR) show a composition bias toward basic residues.

The protein belongs to the universal ribosomal protein uS9 family.

The protein is Small ribosomal subunit protein uS9 of Dehalococcoides mccartyi (strain ATCC BAA-2266 / KCTC 15142 / 195) (Dehalococcoides ethenogenes (strain 195)).